Consider the following 830-residue polypeptide: GPI ethanolamine phosphate transferase 2 (830 aa).

The first 32 residues, 1-32, serve as a signal peptide directing secretion; sequence MNLKQFTCLSCAQLLAILLFIFAFFPRKIVLT. Residues 33-321 lie on the Lumenal side of the membrane; it reads GISKQDPDQD…QYLETVQQID (289 aa). Asn-145, Asn-185, and Asn-298 each carry an N-linked (GlcNAc...) asparagine glycan. The helical transmembrane segment at 322–342 threads the bilayer; the sequence is IVPTIAALFGMPIPMNSVGII. Topologically, residues 343-405 are cytoplasmic; it reads IPDFLQLLPN…TKSATNYNYP (63 aa). The chain crosses the membrane as a helical span at residues 406-426; sequence LLTLAFVGFLIITIIAIYVLL. The Lumenal segment spans residues 427-439; that stretch reads RYSGPDFWQLRVS. A helical transmembrane segment spans residues 440–460; it reads SLSVLLVSIILGVSTFASSFI. Over 461 to 469 the chain is Cytoplasmic; the sequence is EEEHQLWWW. A helical transmembrane segment spans residues 470 to 490; the sequence is IVTAFSAVPLFVYRLNVLIIV. The Lumenal segment spans residues 491–533; the sequence is RWFIMMACVRSIKFWNNSGQKFIYSNVMSNLLNQNPSWKWCLN. A glycan (N-linked (GlcNAc...) asparagine) is linked at Asn-506. A helical membrane pass occupies residues 534–554; sequence MLTFLVLIMASAGFQVLHFIV. Residues 555–598 lie on the Cytoplasmic side of the membrane; the sequence is TTILVGLCFTYKISWEIVNGNQAEIPLFMHDLLAKIDFAPTESN. A helical membrane pass occupies residues 599-619; that stretch reads LIVLARVFFQAWAIVVISRLV. The Lumenal segment spans residues 620-651; it reads LTKLKVLNKNYLIKDMKVYITILLMFQTSSQN. Residues 652–672 form a helical membrane-spanning segment; it reads IGQFLVFQILESQIFYFFQNI. Residues 673-682 are Cytoplasmic-facing; that stretch reads PTASLTSTSK. Residues 683-703 traverse the membrane as a helical segment; that stretch reads IYFSNLVSLILQNFTFFQFGG. At 704–724 the chain is on the lumenal side; it reads TNSISTIDLGNAYHGVSSDYN. The chain crosses the membrane as a helical span at residues 725-745; it reads IYVVGILMSVANFAPAIYWSM. The Cytoplasmic portion of the chain corresponds to 746–768; that stretch reads LPWSINYASIPAQVKLQTFIRSK. A helical transmembrane segment spans residues 769–789; it reads LPAFTYHCIFGTCLMTACVVL. Over 790 to 805 the chain is Lumenal; the sequence is RFHLFIWSVFSPKLCY. Residues 806–826 traverse the membrane as a helical segment; that stretch reads FLGWNFVMGLLNGWLPELALL. Over 827–830 the chain is Cytoplasmic; that stretch reads CALD.

It belongs to the PIGG/PIGN/PIGO family. PIGG subfamily. N-glycosylated.

It localises to the endoplasmic reticulum membrane. Its pathway is glycolipid biosynthesis; glycosylphosphatidylinositol-anchor biosynthesis. Its function is as follows. Ethanolamine phosphate transferase involved in glycosylphosphatidylinositol-anchor biosynthesis. Transfers ethanolamine phosphate to the GPI second mannose. Although not essential, addition of ethanolamine phosphate to the second mannose plays an important role in cell separation via the GPI-based modification of daughter-specific proteins. In Saccharomyces cerevisiae (strain ATCC 204508 / S288c) (Baker's yeast), this protein is GPI ethanolamine phosphate transferase 2 (LAS21).